We begin with the raw amino-acid sequence, 430 residues long: MKIQVENVSPVERKVSIEVDPDRVAQELERAYAGLGRRVKLRGFRPGKAPRKVLERQFRAEVESEVLEKIVQQTFAEAVKVESLPLVAPPHVSVSEGVADGKPIRYTARVEVKPAIAPKDYRGLEVTRKAPEVTDQMVSDELSRLQDSLAQLVPVEGRFEAQEDDWAVIDHEGTIDGKPFEGGKAEGVTVKVAPGAISDGNLEALKGKKLGETVELDEPFPEDHRVEQLRGKTAHMKVTLKALKTRQLPALDDALAKEAGVEGIETLDALRARIRADLEKREKRRAESEVKDALVKAALAKNEFEVPPALVERAIDSMLEGAAERFARSGIDIRRLELDFAKMRADMREQALLQVRGALLLEAIADAEKIEVTDEDLQAEAARIAEELGAPLAKVQQQMRGKDAREALKNKVREDKALALLSSAANIQPA.

The region spanning 164–249 is the PPIase FKBP-type domain; sequence DDWAVIDHEG…LKALKTRQLP (86 aa).

It belongs to the FKBP-type PPIase family. Tig subfamily.

It localises to the cytoplasm. It carries out the reaction [protein]-peptidylproline (omega=180) = [protein]-peptidylproline (omega=0). In terms of biological role, involved in protein export. Acts as a chaperone by maintaining the newly synthesized protein in an open conformation. Functions as a peptidyl-prolyl cis-trans isomerase. This chain is Trigger factor, found in Anaeromyxobacter sp. (strain Fw109-5).